We begin with the raw amino-acid sequence, 828 residues long: MRVPYSWLREVVAAGAPDWDVAPAELEQTLIRIGHEVEEVIELGPVDGPLTVGRVTDIEELTGFKKPIRFCHVDVGDDVDREIVCGATNFVAGDLVVVALPGTTLPGGFAIAARKTYGRNSDGMICSAAELGLGADHSGILVLPPGTAEPGADGAAVLGLDDVIFHLAITPDRGYCMSLRGLAREIACAYDLEFVDPADVKPLPVDGQAWPLTVQPDTGVRRFALRPVTGIDPAAVSPWWLQRRLLLSGIRATSPAVDVTNYVMLELGHPMHAHDRNRISGGLGVRFARPGETVVTLDDIERKLEPVDVLIVDDAATAAIGGVMGAASTEVRADSTDVLLEAAVWDPAAVSRTQRRLHLPSEAARRYERGVDPAISVAALDRCAALLAGIAGGKVSEALTDWRGEPACDGWSPPAIQMPADLPDRLAGVIYPPGTAAKRLAQIGAAVTADGGTLTVVPPSWRPDLLQPADLVEEVLRLEGLEVIGSVLPSAPAGRGLSAAQRRRRAIGRSLAQSGYVEILPTPFLPAGVFDVWGLPDDDPRRGTTQVLNPLEADRPHLATTLLPALLEALVRNVSRGLVDVSLYALAQVVQPTAETRAVQFIPVDRRPTDAEIAVLDASLPRQPQHVAAVLTGLREQRGPWGPGRRAEAADAFEAVRVIARAAGVDVRLRAAQQLPWHPGRCAEVLVGDTPVGYAGQLHPAVVERAGLPRGTCALELDLDAIPLVATLPAPRISPFPAVFQDVSLVVAADVPAQAVADAVCEGAGDLLEDLQLFDVFTGPQLGEHRKSLTFALRFRAPDRTLTEDDATAARDAAVRRAAEAVGAELRT.

Residues 44–155 (GPVDGPLTVG…GTAEPGADGA (112 aa)) enclose the tRNA-binding domain. Residues 411-486 (WSPPAIQMPA…RLEGLEVIGS (76 aa)) form the B5 domain. 4 residues coordinate Mg(2+): D464, D470, E473, and E474. One can recognise an FDX-ACB domain in the interval 734–827 (SPFPAVFQDV…AAEAVGAELR (94 aa)).

The protein belongs to the phenylalanyl-tRNA synthetase beta subunit family. Type 1 subfamily. As to quaternary structure, tetramer of two alpha and two beta subunits. It depends on Mg(2+) as a cofactor.

The protein localises to the cytoplasm. The catalysed reaction is tRNA(Phe) + L-phenylalanine + ATP = L-phenylalanyl-tRNA(Phe) + AMP + diphosphate + H(+). The sequence is that of Phenylalanine--tRNA ligase beta subunit from Mycolicibacterium paratuberculosis (strain ATCC BAA-968 / K-10) (Mycobacterium paratuberculosis).